Reading from the N-terminus, the 274-residue chain is PTS system sorbose-specific EIID component (274 aa).

The PTS EIID domain occupies 4–273 (KKITQGDLVS…GIIGNALGFL (270 aa)). Helical transmembrane passes span 61-81 (LVFFNTTPAVCGPVIAVTAAM), 99-119 (IKVGLMGPLAGVGDPLVWGTL), 126-146 (LGASLALSGNILGPLLFFFIF), 186-206 (ILGLFVMGVLVTKWTTINVPL), 226-246 (ILDQLCPGLLALGLTLLMVRL), and 253-273 (PVWLIFALFGLGIIGNALGFL).

The protein localises to the cell inner membrane. Its function is as follows. The phosphoenolpyruvate-dependent sugar phosphotransferase system (PTS), a major carbohydrate active transport system, catalyzes the phosphorylation of incoming sugar substrates concomitant with their translocation across the cell membrane. The enzyme II SorABFM PTS system is involved in sorbose transport. In Klebsiella pneumoniae, this protein is PTS system sorbose-specific EIID component.